The following is a 154-amino-acid chain: 3-hydroxyacyl-[acyl-carrier-protein] dehydratase FabZ (154 aa).

The active site involves histidine 54.

The protein belongs to the thioester dehydratase family. FabZ subfamily.

Its subcellular location is the cytoplasm. It carries out the reaction a (3R)-hydroxyacyl-[ACP] = a (2E)-enoyl-[ACP] + H2O. Involved in unsaturated fatty acids biosynthesis. Catalyzes the dehydration of short chain beta-hydroxyacyl-ACPs and long chain saturated and unsaturated beta-hydroxyacyl-ACPs. This Chlamydia abortus (strain DSM 27085 / S26/3) (Chlamydophila abortus) protein is 3-hydroxyacyl-[acyl-carrier-protein] dehydratase FabZ.